Here is a 260-residue protein sequence, read N- to C-terminus: 4-hydroxy-tetrahydrodipicolinate reductase (260 aa).

12 to 17 (GFRGKM) is an NAD(+) binding site. Residue lysine 40 participates in NADP(+) binding. NAD(+) is bound by residues 92–94 (GTT) and 118–121 (APNF). Histidine 148 acts as the Proton donor/acceptor in catalysis. Histidine 149 contributes to the (S)-2,3,4,5-tetrahydrodipicolinate binding site. The active-site Proton donor is lysine 152. (S)-2,3,4,5-tetrahydrodipicolinate is bound at residue 158 to 159 (GT).

The protein belongs to the DapB family.

It is found in the cytoplasm. The catalysed reaction is (S)-2,3,4,5-tetrahydrodipicolinate + NAD(+) + H2O = (2S,4S)-4-hydroxy-2,3,4,5-tetrahydrodipicolinate + NADH + H(+). The enzyme catalyses (S)-2,3,4,5-tetrahydrodipicolinate + NADP(+) + H2O = (2S,4S)-4-hydroxy-2,3,4,5-tetrahydrodipicolinate + NADPH + H(+). It functions in the pathway amino-acid biosynthesis; L-lysine biosynthesis via DAP pathway; (S)-tetrahydrodipicolinate from L-aspartate: step 4/4. In terms of biological role, catalyzes the conversion of 4-hydroxy-tetrahydrodipicolinate (HTPA) to tetrahydrodipicolinate. The sequence is that of 4-hydroxy-tetrahydrodipicolinate reductase from Lactococcus lactis subsp. lactis (strain IL1403) (Streptococcus lactis).